Reading from the N-terminus, the 503-residue chain is MAGNMLANYVQVYVMLPLDVVSVDNKFEKGDEIRAQLKKLTEAGVDGVMIDVWWGLVEGKGPKAYDWSAYKQVFDLVHEAGLKLQAIMSFHQCGGNVGDVVNIPIPQWVRDVGATDPDIFYTNRGGTRNIEYLTLGVDDQPLFHGRTAVQMYADYMASFRENMKKFLDAGTIVDIEVGLGPAGEMRYPSYPQSQGWVFPGIGEFICYDKYLEADFKAAAAKAGHPEWELPDDAGEYNDTPEKTQFFKDNGTYLTEKGKFFLSWYSNKLIKHGDKILDEANKVFLGCRVQLAIKISGIHWWYRVPNHAAELTAGYYNLDDRDGYRTIARMLTRHHASMNFTCAEMRDSEQSEEAKSAPEELVQQVLSAGWREGLHVACENALGRYDATAYNTILRNARPKGINKNGPPEHKLFGFTYLRLSNELLEGQNYATFQTFVEKMHANLGHDPSVDPVAPLERSKPEMPIEMILKAAQPKLEPFPFDKNTDLPVKDHTDVGDEVLVAPV.

Substrate is bound by residues aspartate 51, histidine 91, and aspartate 99. Glutamate 184 acts as the Proton donor in catalysis. 3 residues coordinate substrate: lysine 293, histidine 298, and threonine 340. Residue glutamate 378 is the Proton acceptor of the active site. Substrate contacts are provided by residues 379-380 and arginine 418; that span reads NA.

This sequence belongs to the glycosyl hydrolase 14 family.

It catalyses the reaction Hydrolysis of (1-&gt;4)-alpha-D-glucosidic linkages in polysaccharides so as to remove successive maltose units from the non-reducing ends of the chains.. This chain is Beta-amylase Tri a 17 (BMY1), found in Triticum aestivum (Wheat).